The sequence spans 298 residues: Troponin T, cardiac muscle (298 aa).

The span at 1 to 70 shows a compositional bias: acidic residues; it reads MSDIEEVVEE…EAKEAEDGPM (70 aa). Disordered stretches follow at residues 1–95 and 120–219; these read MSDI…GERV and FENR…EKKK. An N-acetylserine modification is found at serine 2. Serine 2 bears the Phosphoserine; by CK2 mark. Basic and acidic residues-rich tracts occupy residues 120–183 and 203–219; these read FENR…DEAR and QTER…EKKK. A Phosphothreonine; by PKC/PRKCA modification is found at threonine 204. Serine 208 is modified (phosphoserine; by PKC/PRKCA). Residue threonine 213 is modified to Phosphothreonine; by PKC/PRKCA and RAF1. Threonine 294 bears the Phosphothreonine; by PKC/PRKCA mark.

The protein belongs to the troponin T family. In terms of processing, phosphorylation at Thr-213 by PRKCA induces significant reduction in myofilament calcium sensitivity and actomyosin ATPase activity. Heart. The fetal heart shows a greater expression in the atrium than in the ventricle, while the adult heart shows a greater expression in the ventricle than in the atrium. Isoform 6 predominates in normal adult heart. Isoforms 1, 7 and 8 are expressed in fetal heart. Isoform 7 is also expressed in failing adult heart.

Functionally, troponin T is the tropomyosin-binding subunit of troponin, the thin filament regulatory complex which confers calcium-sensitivity to striated muscle actomyosin ATPase activity. This chain is Troponin T, cardiac muscle (TNNT2), found in Homo sapiens (Human).